The following is a 536-amino-acid chain: Multifunctional cytochrome P450 monooxygenase af510 (536 aa).

A helical transmembrane segment spans residues 4–24 (ELSTLQLSCVAFVAFMAVLVF). Asn210 and Asn293 each carry an N-linked (GlcNAc...) asparagine glycan. Cys448 contributes to the heme binding site.

The protein belongs to the cytochrome P450 family. Requires heme as cofactor.

The protein localises to the membrane. The enzyme catalyses (+)-exo-beta-bergamotene + 2 reduced [NADPH--hemoprotein reductase] + 3 O2 = 5-dehydro-6-demethoxyfumagillol + 2 oxidized [NADPH--hemoprotein reductase] + 3 H2O + 2 H(+). Its pathway is secondary metabolite biosynthesis; terpenoid biosynthesis. In terms of biological role, multifunctional cytochrome P450 monooxygenase; part of the gene cluster that mediates the biosynthesis of fumagillin, a meroterpenoid that has numerous biological activities including irreversible inhibition of human type 2 methionine aminopeptidase (METAP2). Within the pathway, the multifunctional cytochrome P450 monooxygenase af510 acts as a 2,4,6-trichlorophenol monooxygenase that first performs the C-H hydroxylation at the bridgehead C5 position to yield 5R-hydroxyl-beta-trans-bergamotene. Subsequently, a four electron oxidation initiated at C-9 coupled to cleavage of the cyclobutane C5-C8 bond of the bicyclo[3.1.1] core yields the epoxyketone intermediate 5-keto-cordycol. An additional epoxidation reaction also catalyzed by af510 then furnishes the characteristic bisepoxide ketone 5-keto-demethoxyfumagillol. The pathway begins with the conversion of farnesyl pyrophosphate (FPP) to beta-trans-bergamotene by the membrane-bound beta-trans-bergamotene synthase af520. The multifunctional cytochrome P450 monooxygenase af510 then converts beta-trans-bergamotene into 5-keto-demethoxyfumagillol via several oxydation steps. 5-keto-demethoxyfumagillol is then subjected to successive C-6 hydroxylation and O-methylation by the dioxygenase af480 and O-methyltransferase af390-400, respectively, to yield 5-keto-fumagillol, which is then stereoselectively reduced by the keto-reductase af490 to 5R-hydroxy-seco-sesquiterpene. The next step is the polyketide transferase af380-catalyzed transfer of a dodecapentaenoyl group synthesized by the polyketide synthase af370 onto 5R-hydroxy-seco-sesquiterpene which leads to the production of prefumagillin. Finally, oxidative cleavage by the monooxygenase af470 converts prefumagillin to fumagillin. The sequence is that of Multifunctional cytochrome P450 monooxygenase af510 from Aspergillus fumigatus (strain ATCC MYA-4609 / CBS 101355 / FGSC A1100 / Af293) (Neosartorya fumigata).